Here is a 212-residue protein sequence, read N- to C-terminus: Urease accessory protein UreG 2 (212 aa).

11–18 provides a ligand contact to GTP; sequence GPVGSGKT.

It belongs to the SIMIBI class G3E GTPase family. UreG subfamily. As to quaternary structure, homodimer. UreD, UreF and UreG form a complex that acts as a GTP-hydrolysis-dependent molecular chaperone, activating the urease apoprotein by helping to assemble the nickel containing metallocenter of UreC. The UreE protein probably delivers the nickel.

The protein resides in the cytoplasm. Facilitates the functional incorporation of the urease nickel metallocenter. This process requires GTP hydrolysis, probably effectuated by UreG. The polypeptide is Urease accessory protein UreG 2 (Brucella abortus (strain 2308)).